The chain runs to 430 residues: Trigger factor (430 aa).

Positions 163–248 (GDIAVIDFEG…LNSLKRKNMP (86 aa)) constitute a PPIase FKBP-type domain.

Belongs to the FKBP-type PPIase family. Tig subfamily.

It is found in the cytoplasm. It carries out the reaction [protein]-peptidylproline (omega=180) = [protein]-peptidylproline (omega=0). Its function is as follows. Involved in protein export. Acts as a chaperone by maintaining the newly synthesized protein in an open conformation. Functions as a peptidyl-prolyl cis-trans isomerase. The chain is Trigger factor from Brevibacillus brevis (strain 47 / JCM 6285 / NBRC 100599).